A 261-amino-acid chain; its full sequence is Indole-3-glycerol phosphate synthase (261 aa).

This sequence belongs to the TrpC family.

The enzyme catalyses 1-(2-carboxyphenylamino)-1-deoxy-D-ribulose 5-phosphate + H(+) = (1S,2R)-1-C-(indol-3-yl)glycerol 3-phosphate + CO2 + H2O. It participates in amino-acid biosynthesis; L-tryptophan biosynthesis; L-tryptophan from chorismate: step 4/5. In Paraburkholderia xenovorans (strain LB400), this protein is Indole-3-glycerol phosphate synthase.